The primary structure comprises 140 residues: L-fucose mutarotase (140 aa).

Residue His-22 is the Proton donor of the active site. Residues Asp-30, Arg-107, and 129–131 (YGN) contribute to the substrate site.

Belongs to the RbsD / FucU family. FucU mutarotase subfamily. Homodecamer.

The protein localises to the cytoplasm. It carries out the reaction alpha-L-fucose = beta-L-fucose. The protein operates within carbohydrate metabolism; L-fucose metabolism. Functionally, involved in the anomeric conversion of L-fucose. This Salmonella gallinarum (strain 287/91 / NCTC 13346) protein is L-fucose mutarotase.